The primary structure comprises 158 residues: MSGAGAPTFTPDPAAASGLNVAIVAAQWHTEIMDGLIAGAQAAAADLGLEPVLVRVPGTVELTVAAARLAERFDVVVVLGVVVRGDTPHFDYVCQSVTQGVTEVSVRTGVPVGFGVLTVDTEQQARDRAGLPGSREDKGREALEAAVLTELALRRAGA.

5-amino-6-(D-ribitylamino)uracil-binding positions include Trp-28, 59–61 (TVE), and 81–83 (VVV). Residue 86–87 (DT) participates in (2S)-2-hydroxy-3-oxobutyl phosphate binding. Catalysis depends on His-89, which acts as the Proton donor. Residue Phe-114 participates in 5-amino-6-(D-ribitylamino)uracil binding. Arg-128 is a binding site for (2S)-2-hydroxy-3-oxobutyl phosphate.

This sequence belongs to the DMRL synthase family.

The catalysed reaction is (2S)-2-hydroxy-3-oxobutyl phosphate + 5-amino-6-(D-ribitylamino)uracil = 6,7-dimethyl-8-(1-D-ribityl)lumazine + phosphate + 2 H2O + H(+). The protein operates within cofactor biosynthesis; riboflavin biosynthesis; riboflavin from 2-hydroxy-3-oxobutyl phosphate and 5-amino-6-(D-ribitylamino)uracil: step 1/2. Functionally, catalyzes the formation of 6,7-dimethyl-8-ribityllumazine by condensation of 5-amino-6-(D-ribitylamino)uracil with 3,4-dihydroxy-2-butanone 4-phosphate. This is the penultimate step in the biosynthesis of riboflavin. The protein is 6,7-dimethyl-8-ribityllumazine synthase of Micrococcus luteus (strain ATCC 4698 / DSM 20030 / JCM 1464 / CCM 169 / CCUG 5858 / IAM 1056 / NBRC 3333 / NCIMB 9278 / NCTC 2665 / VKM Ac-2230) (Micrococcus lysodeikticus).